The following is a 395-amino-acid chain: NAD(P)H-quinone oxidoreductase subunit H, chloroplastic (395 aa).

This sequence belongs to the complex I 49 kDa subunit family. NDH is composed of at least 16 different subunits, 5 of which are encoded in the nucleus.

Its subcellular location is the plastid. The protein resides in the chloroplast thylakoid membrane. The enzyme catalyses a plastoquinone + NADH + (n+1) H(+)(in) = a plastoquinol + NAD(+) + n H(+)(out). The catalysed reaction is a plastoquinone + NADPH + (n+1) H(+)(in) = a plastoquinol + NADP(+) + n H(+)(out). In terms of biological role, NDH shuttles electrons from NAD(P)H:plastoquinone, via FMN and iron-sulfur (Fe-S) centers, to quinones in the photosynthetic chain and possibly in a chloroplast respiratory chain. The immediate electron acceptor for the enzyme in this species is believed to be plastoquinone. Couples the redox reaction to proton translocation, and thus conserves the redox energy in a proton gradient. The chain is NAD(P)H-quinone oxidoreductase subunit H, chloroplastic from Staurastrum punctulatum (Green alga).